Consider the following 264-residue polypeptide: uncharacterized protein (264 aa).

Positions 1-23 (MQQWNLTISNILIGLFFCFSAQA) are cleaved as a signal peptide.

This is an uncharacterized protein from Shewanella oneidensis (strain ATCC 700550 / JCM 31522 / CIP 106686 / LMG 19005 / NCIMB 14063 / MR-1).